A 263-amino-acid chain; its full sequence is GTP cyclohydrolase 1 type 2 homolog (263 aa).

Histidine 65, histidine 66, aspartate 104, histidine 225, and glutamate 229 together coordinate a divalent metal cation.

The protein belongs to the GTP cyclohydrolase I type 2/NIF3 family. Homohexamer.

The protein is GTP cyclohydrolase 1 type 2 homolog of Nostoc sp. (strain PCC 7120 / SAG 25.82 / UTEX 2576).